A 142-amino-acid polypeptide reads, in one-letter code: Small ribosomal subunit protein bS6 (142 aa).

The segment covering 110–133 (NKKPSHAKEKHEKTEHTHSHHLEE) has biased composition (basic and acidic residues). Residues 110 to 142 (NKKPSHAKEKHEKTEHTHSHHLEEAESVGSHSE) are disordered.

Belongs to the bacterial ribosomal protein bS6 family.

Binds together with bS18 to 16S ribosomal RNA. This Helicobacter pylori (strain HPAG1) protein is Small ribosomal subunit protein bS6.